The primary structure comprises 235 residues: MSNHLEAKMGDIADTVLLPGDPLRAKYIAETFLENPVCYNTVRNAFGYTGTYKGKRISVQGTGMGIPSISIYTNELISEYGVKTLFRVGTSGGMSPDVHVRDVVLAQAASTDSSIIHNTFGGGIYYAAISDFGLLDTAYHVAQDLKISVRVGNVLAEDRFYNDEMDRQKLVDYGVIATEMESTALFMLAAKYHVRALSVLTISNHLMTGESTTPEEREKSFNDMIRVALDTAAKA.

Position 4 (histidine 4) interacts with a purine D-ribonucleoside. Residues glycine 20, arginine 24, arginine 43, and 87–90 (RVGT) contribute to the phosphate site. Residues 179–181 (EME) and 203–204 (SN) each bind a purine D-ribonucleoside.

Belongs to the PNP/UDP phosphorylase family. As to quaternary structure, homohexamer; trimer of homodimers.

It carries out the reaction a purine D-ribonucleoside + phosphate = a purine nucleobase + alpha-D-ribose 1-phosphate. The enzyme catalyses a purine 2'-deoxy-D-ribonucleoside + phosphate = a purine nucleobase + 2-deoxy-alpha-D-ribose 1-phosphate. Functionally, catalyzes the reversible phosphorolytic breakdown of the N-glycosidic bond in the beta-(deoxy)ribonucleoside molecules, with the formation of the corresponding free purine bases and pentose-1-phosphate. In Levilactobacillus brevis (strain ATCC 367 / BCRC 12310 / CIP 105137 / JCM 1170 / LMG 11437 / NCIMB 947 / NCTC 947) (Lactobacillus brevis), this protein is Purine nucleoside phosphorylase DeoD-type.